The chain runs to 459 residues: Argininosuccinate lyase (459 aa).

It belongs to the lyase 1 family. Argininosuccinate lyase subfamily.

The protein localises to the cytoplasm. It carries out the reaction 2-(N(omega)-L-arginino)succinate = fumarate + L-arginine. It functions in the pathway amino-acid biosynthesis; L-arginine biosynthesis; L-arginine from L-ornithine and carbamoyl phosphate: step 3/3. In Buchnera aphidicola subsp. Schizaphis graminum (strain Sg), this protein is Argininosuccinate lyase.